Reading from the N-terminus, the 185-residue chain is Ribosome-recycling factor (185 aa).

The disordered stretch occupies residues 163-185 (LTNEATKKIDAISKDKEKEITEG). Residues 167–185 (ATKKIDAISKDKEKEITEG) are compositionally biased toward basic and acidic residues.

It belongs to the RRF family.

It is found in the cytoplasm. In terms of biological role, responsible for the release of ribosomes from messenger RNA at the termination of protein biosynthesis. May increase the efficiency of translation by recycling ribosomes from one round of translation to another. The chain is Ribosome-recycling factor from Latilactobacillus sakei subsp. sakei (strain 23K) (Lactobacillus sakei subsp. sakei).